A 727-amino-acid chain; its full sequence is Synaptic vesicle glycoprotein 2C (727 aa).

Residues 1–57 (MEDSYKDRTSLMKGAKDIAREVKKQTVKKVNQAVDRAQDEYTQRSYSRFQDEEDDDD) are interaction with SYT1. Residues 1–154 (MEDSYKDRTS…CGHGRFQWAL (154 aa)) are Cytoplasmic-facing. 2 disordered regions span residues 24 to 84 (KQTV…GHDE) and 109 to 128 (VGQP…SERR). Residues S75 and S76 each carry the phosphoserine modification. T79 is modified (phosphothreonine). Positions 113–128 (KGDEYKDRRELESERR) are enriched in basic and acidic residues. The helical transmembrane segment at 155 to 175 (FFVLGMALMADGVEVFVVGFV) threads the bilayer. At 176–191 (LPSAETDLCIPNSGSG) the chain is on the extracellular side. The helical transmembrane segment at 192 to 212 (WLGSIVYLGMMVGAFFWGGLA) threads the bilayer. Topologically, residues 213 to 226 (DKVGRKQSLLICMS) are cytoplasmic. The helical transmembrane segment at 227-247 (VNGFFAFLSSFVQGYGFFLFC) threads the bilayer. Residue R248 is a topological domain, extracellular. The helical transmembrane segment at 249-269 (LLSGFGIGGAIPTVFSYFAEV) threads the bilayer. The Cytoplasmic segment spans residues 270-280 (LAREKRGEHLS). A helical membrane pass occupies residues 281–301 (WLCMFWMIGGIYASAMAWAII). Topologically, residues 302-320 (PHYGWSFSMGSAYQFHSWR) are extracellular. The helical transmembrane segment at 321-341 (VFVIVCALPCVSSVVALTFMP) threads the bilayer. The Cytoplasmic segment spans residues 342–437 (ESPRFLLEVG…PVRDNTIKLT (96 aa)). A helical membrane pass occupies residues 438–458 (IVWFTLSFGYYGLSVWFPDVI). Over 459 to 578 (KPLQSDEYAL…CQITFDDDYS (120 aa)) the chain is Extracellular. Y466 bears the Phosphotyrosine mark. N-linked (GlcNAc...) asparagine glycans are attached at residues N480, N484, N534, N559, and N565. Positions 519–563 (SCTFEDVTSVNTYFKNCTFIDTVFDNTDFEPYKFIDSEFKNCSFF) are (Microbial infection) C.botulinum neurotoxin type A-binding. The chain crosses the membrane as a helical span at residues 579-599 (AYWIYFVNFLGTLAVLPGNIV). The Cytoplasmic segment spans residues 600–609 (SALLMDRIGR). Residues 610–630 (LTMLGGSMVLSGISCFFLWFG) traverse the membrane as a helical segment. Topologically, residues 631–636 (TSESMM) are extracellular. Residues 637–657 (IGMLCLYNGLTISAWNSLDVV) traverse the membrane as a helical segment. Residues 658 to 669 (TVELYPTDRRAT) lie on the Cytoplasmic side of the membrane. The helical transmembrane segment at 670 to 690 (GFGFLNALCKAAAVLGNLIFG) threads the bilayer. Over 691-698 (SLVSITKS) the chain is Extracellular. A helical transmembrane segment spans residues 699–719 (IPILLASTVLVCGGLVGLCLP). Residues 720 to 727 (DTRTQVLM) lie on the Cytoplasmic side of the membrane.

It belongs to the major facilitator superfamily. In terms of assembly, interacts with SYT1 in a calcium-dependent manner. As to quaternary structure, (Microbial infection) Interacts with C.botulinum neurotoxin type A1 and type A2 (BoNT/A, botA). Interaction is improved by glycosylation of SV2. N-glycosylated. Upon expression in a kidney cell line the most abundant glycan on Asn-534 is GlcNAc(3)Hex(5), while on Asn-559 and Asn-565 the most abundant glycan is GlcNAc2Fuc1Man3GlcNAc3Gal3. Both Asn-559 and Asn-565 have a high degree of glycan heterogeneity.

Its subcellular location is the cytoplasmic vesicle. The protein resides in the secretory vesicle. It localises to the synaptic vesicle membrane. Functionally, plays a role in the control of regulated secretion in neural and endocrine cells, enhancing selectively low-frequency neurotransmission. Positively regulates vesicle fusion by maintaining the readily releasable pool of secretory vesicles. (Microbial infection) Receptor for C.botulinum neurotoxin type A (BoNT/A, botA); the toxin probably binds via extracellular loop 4. Recognition by BoNT/A relies on both protein-protein and protein-N-glycosylation; glycosylation of Asn-559 increases its affinity for BoNT/A. Also serves as a receptor for the closely related C.botulinum neurotoxin type A2; glycosylation is not essential but enhances the interaction. Its function is as follows. (Microbial infection) Possible receptor for C.botulinum neurotoxin type D (BoNT/D, botD); note that type D does not usually infect humans. In Homo sapiens (Human), this protein is Synaptic vesicle glycoprotein 2C (SV2C).